Here is a 497-residue protein sequence, read N- to C-terminus: Cytochrome P450 26A1 (497 aa).

Residue C442 coordinates heme.

It belongs to the cytochrome P450 family. The cofactor is heme.

It localises to the endoplasmic reticulum membrane. The protein resides in the microsome membrane. It carries out the reaction all-trans-retinoate + reduced [NADPH--hemoprotein reductase] + O2 = all-trans-(4S)-hydroxyretinoate + oxidized [NADPH--hemoprotein reductase] + H2O + H(+). The catalysed reaction is all-trans-(4S)-hydroxyretinoate + reduced [NADPH--hemoprotein reductase] + O2 = all-trans-(4S,16)-dihydroxyretinoate + oxidized [NADPH--hemoprotein reductase] + H2O + H(+). The enzyme catalyses all-trans-retinoate + reduced [NADPH--hemoprotein reductase] + O2 = all-trans-18-hydroxyretinoate + oxidized [NADPH--hemoprotein reductase] + H2O + H(+). In terms of biological role, a cytochrome P450 monooxygenase involved in the metabolism of retinoates (RAs), the active metabolites of vitamin A, and critical signaling molecules in animals. RAs exist as at least four different isomers: all-trans-RA (atRA), 9-cis-RA, 13-cis-RA, and 9,13-dicis-RA, where atRA is considered to be the biologically active isomer, although 9-cis-RA and 13-cis-RA also have activity. Catalyzes the hydroxylation of atRA primarily at C-4 and C-18, thereby contributing to the regulation of atRA homeostasis and signaling. Hydroxylation of atRA limits its biological activity and initiates a degradative process leading to its eventual elimination. Involved in the convertion of atRA to all-trans-4-oxo-RA. Able to metabolize other RAs such as 9-cis, 13-cis and 9,13-di-cis RA. Can oxidize all-trans-13,14-dihydroretinoate (DRA) to metabolites which could include all-trans-4-oxo-DRA, all-trans-4-hydroxy-DRA, all-trans-5,8-epoxy-DRA, and all-trans-18-hydroxy-DRA. May play a role in the oxidative metabolism of xenobiotics such as tazarotenic acid. This chain is Cytochrome P450 26A1, found in Mus musculus (Mouse).